Reading from the N-terminus, the 75-residue chain is Large ribosomal subunit protein uL24c (75 aa).

It belongs to the universal ribosomal protein uL24 family. In terms of assembly, part of the 50S ribosomal subunit.

The protein localises to the plastid. It localises to the chloroplast. One of two assembly initiator proteins, it binds directly to the 5'-end of the 23S rRNA, where it nucleates assembly of the 50S subunit. This Cyanidioschyzon merolae (strain NIES-3377 / 10D) (Unicellular red alga) protein is Large ribosomal subunit protein uL24c (rpl24).